The chain runs to 190 residues: Elongation factor P-like protein (190 aa).

It belongs to the elongation factor P family.

This chain is Elongation factor P-like protein, found in Pectobacterium carotovorum subsp. carotovorum (strain PC1).